Here is a 700-residue protein sequence, read N- to C-terminus: Hedgehog-interacting protein (700 aa).

Residues 1 to 17 (MLKMLSFKLLLLAVALG) form the signal peptide. N-linked (GlcNAc...) asparagine glycosylation occurs at Asn99. Cystine bridges form between Cys216-Cys536, Cys218-Cys543, Cys402-Cys624, Cys435-Cys452, Cys500-Cys594, Cys608-Cys617, Cys612-Cys623, Cys625-Cys634, Cys639-Cys649, Cys643-Cys655, and Cys657-Cys666. Residues 376-388 (LDDMEEMDGLSDF) form an interaction with SHH zinc binding site region. Position 383 (Asp383) interacts with Zn(2+). Asn416, Asn447, and Asn459 each carry an N-linked (GlcNAc...) asparagine glycan. EGF-like domains are found at residues 607–634 (ECSRLCRNGYCTPTGKCCCSPGWEGDFC) and 635–667 (RTAKCEPACRHGGVCVRPNKCLCKKGYLGPQCE).

It belongs to the HHIP family. In terms of assembly, interacts with all three hedgehog family members, SHH, IHH and DHH. As to expression, widely expressed in fetal and adult tissues. Highest expression in adult heart, liver and pancreas, and in fetal kidney.

Its subcellular location is the cell membrane. It is found in the secreted. The protein localises to the cytoplasm. Its function is as follows. Modulates hedgehog signaling in several cell types including brain and lung through direct interaction with members of the hedgehog family. The sequence is that of Hedgehog-interacting protein (HHIP) from Homo sapiens (Human).